A 70-amino-acid chain; its full sequence is Conotoxin Lt11.6 (70 aa).

The signal sequence occupies residues 1–26 (MMFRLTSVGSFLLVIVFLNLVVLTNA). 4 disulfides stabilise this stretch: cysteine 27/cysteine 41, cysteine 34/cysteine 46, cysteine 40/cysteine 50, and cysteine 45/cysteine 54. Positions 58-70 (AQRQKLLRSFGQR) are excised as a propeptide.

This sequence belongs to the conotoxin I2 superfamily. As to expression, expressed by the venom duct.

The protein resides in the secreted. In Conus litteratus (Lettered cone), this protein is Conotoxin Lt11.6.